Here is a 421-residue protein sequence, read N- to C-terminus: ATP-dependent RNA helicase RhlB (421 aa).

A Q motif motif is present at residues 9 to 37; the sequence is QKFSDFALHPKVVEALEKKGFHNCTPIQA. In terms of domain architecture, Helicase ATP-binding spans 40–219; the sequence is LPLTLAGRDV…FEQMNNAEYI (180 aa). Residue 53-60 coordinates ATP; the sequence is AQTGTGKT. The DEAD box signature appears at 165-168; the sequence is DEAD. The 146-residue stretch at 245–390 folds into the Helicase C-terminal domain; sequence RLLQTLIEEE…VSKYNPDALM (146 aa). Positions 392–421 are disordered; the sequence is DLPKPLRLTRPRTGNGPRRTGAPRNRRRSG. The segment covering 402 to 414 has biased composition (low complexity); that stretch reads PRTGNGPRRTGAP.

The protein belongs to the DEAD box helicase family. RhlB subfamily. Component of the RNA degradosome, which is a multiprotein complex involved in RNA processing and mRNA degradation.

The protein resides in the cytoplasm. It carries out the reaction ATP + H2O = ADP + phosphate + H(+). Functionally, DEAD-box RNA helicase involved in RNA degradation. Has RNA-dependent ATPase activity and unwinds double-stranded RNA. The polypeptide is ATP-dependent RNA helicase RhlB (Escherichia fergusonii (strain ATCC 35469 / DSM 13698 / CCUG 18766 / IAM 14443 / JCM 21226 / LMG 7866 / NBRC 102419 / NCTC 12128 / CDC 0568-73)).